The primary structure comprises 573 residues: Isocitrate dehydrogenase kinase/phosphatase (573 aa).

Residues 318–324 (APGVRGM) and lysine 339 contribute to the ATP site. The active site involves aspartate 374.

It belongs to the AceK family.

It localises to the cytoplasm. It carries out the reaction L-seryl-[isocitrate dehydrogenase] + ATP = O-phospho-L-seryl-[isocitrate dehydrogenase] + ADP + H(+). Bifunctional enzyme which can phosphorylate or dephosphorylate isocitrate dehydrogenase (IDH) on a specific serine residue. This is a regulatory mechanism which enables bacteria to bypass the Krebs cycle via the glyoxylate shunt in response to the source of carbon. When bacteria are grown on glucose, IDH is fully active and unphosphorylated, but when grown on acetate or ethanol, the activity of IDH declines drastically concomitant with its phosphorylation. The polypeptide is Isocitrate dehydrogenase kinase/phosphatase (Stutzerimonas stutzeri (strain A1501) (Pseudomonas stutzeri)).